The sequence spans 65 residues: UPF0434 protein Mmwyl1_2153 (65 aa).

It belongs to the UPF0434 family.

This chain is UPF0434 protein Mmwyl1_2153, found in Marinomonas sp. (strain MWYL1).